The following is a 73-amino-acid chain: uncharacterized protein (73 aa).

Residues 1 to 30 (MVDFYFIEEKVAYRAAFTTTGKIAATLGLA) form the signal peptide.

This is an uncharacterized protein from Archaeoglobus fulgidus (strain ATCC 49558 / DSM 4304 / JCM 9628 / NBRC 100126 / VC-16).